Consider the following 397-residue polypeptide: Ribosomal RNA large subunit methyltransferase I (397 aa).

The 77-residue stretch at 2-78 (TPAIYLVKGR…EQEPIDRDFF (77 aa)) folds into the PUA domain.

This sequence belongs to the methyltransferase superfamily. RlmI family.

The protein resides in the cytoplasm. The enzyme catalyses cytidine(1962) in 23S rRNA + S-adenosyl-L-methionine = 5-methylcytidine(1962) in 23S rRNA + S-adenosyl-L-homocysteine + H(+). Specifically methylates the cytosine at position 1962 (m5C1962) of 23S rRNA. The protein is Ribosomal RNA large subunit methyltransferase I of Vibrio cholerae serotype O1 (strain ATCC 39541 / Classical Ogawa 395 / O395).